The primary structure comprises 360 residues: Probable cinnamyl alcohol dehydrogenase 1 (360 aa).

A Zn(2+)-binding site is contributed by Cys47. Residue Thr49 coordinates NADP(+). Positions 69, 70, 100, 103, 106, 114, and 163 each coordinate Zn(2+). Residues Thr167, 189–194 (GLGGVG), 212–217 (SSSDKK), Thr252, Gly276, and 299–301 (SFI) each bind NADP(+).

Belongs to the zinc-containing alcohol dehydrogenase family. Homodimer. Requires Zn(2+) as cofactor.

It catalyses the reaction (E)-cinnamyl alcohol + NADP(+) = (E)-cinnamaldehyde + NADPH + H(+). It carries out the reaction (E)-coniferol + NADP(+) = (E)-coniferaldehyde + NADPH + H(+). The catalysed reaction is (E)-sinapyl alcohol + NADP(+) = (E)-sinapaldehyde + NADPH + H(+). The enzyme catalyses (E)-4-coumaroyl alcohol + NADP(+) = (E)-4-coumaraldehyde + NADPH + H(+). It catalyses the reaction (E)-caffeyl alcohol + NADP(+) = (E)-caffeyl aldehyde + NADPH + H(+). It functions in the pathway aromatic compound metabolism; phenylpropanoid biosynthesis. Its function is as follows. Involved in lignin biosynthesis. Catalyzes the final step specific for the production of lignin monomers. Catalyzes the NADPH-dependent reduction of coniferaldehyde, 5-hydroxyconiferaldehyde, sinapaldehyde, 4-coumaraldehyde and caffeyl aldehyde to their respective alcohols. This chain is Probable cinnamyl alcohol dehydrogenase 1 (CAD1), found in Aralia cordata (Udo).